The chain runs to 308 residues: Peroxisomal targeting signal 2 receptor (308 aa).

WD repeat units follow at residues 57–88 (DVED…RLFD), 101–132 (EHKA…KLWL), 145–176 (GSNS…KFWD), 187–218 (EIPN…YCYD), 231–262 (GHQL…RIFD), and 274–306 (LHSE…YIWN).

It belongs to the WD repeat peroxin-7 family. Interacts with PEX21.

Its subcellular location is the cytoplasm. The protein localises to the cytosol. It is found in the peroxisome matrix. Its function is as follows. Receptor required for the peroxisomal import of proteins containing a C-terminal PTS2-type peroxisomal targeting signal, such as 3-oxoacyl-CoA thiolase. Specifically binds to cargo proteins containing a PTS2 peroxisomal targeting signal in the cytosol. Cargo protein-binding triggers interaction with PEX21 and formation of a ternary complex composed of PEX21 and PEX7 along with PTS2-containing cargo proteins, which is tranlocated into peroxisomes by passing through the PEX13-PEX14 docking complex. The sequence is that of Peroxisomal targeting signal 2 receptor (pex7) from Schizosaccharomyces pombe (strain 972 / ATCC 24843) (Fission yeast).